A 151-amino-acid polypeptide reads, in one-letter code: Large ribosomal subunit protein uL15 (151 aa).

The interval 1 to 57 (MTLRLDSLKANKGARRRKLRKGRGIAAGQGASCGFGMRGQKSRSGRPTRPGFEGGQM) is disordered. A compositionally biased stretch (basic residues) spans 12–23 (KGARRRKLRKGR). Over residues 25-37 (IAAGQGASCGFGM) the composition is skewed to gly residues.

This sequence belongs to the universal ribosomal protein uL15 family. Part of the 50S ribosomal subunit.

Functionally, binds to the 23S rRNA. This Synechococcus sp. (strain CC9902) protein is Large ribosomal subunit protein uL15.